The chain runs to 585 residues: Formate--tetrahydrofolate ligase (585 aa).

Residue Thr-74–Thr-81 participates in ATP binding.

The protein belongs to the formate--tetrahydrofolate ligase family.

The catalysed reaction is (6S)-5,6,7,8-tetrahydrofolate + formate + ATP = (6R)-10-formyltetrahydrofolate + ADP + phosphate. Its pathway is one-carbon metabolism; tetrahydrofolate interconversion. The sequence is that of Formate--tetrahydrofolate ligase from Yersinia enterocolitica serotype O:8 / biotype 1B (strain NCTC 13174 / 8081).